The following is a 216-amino-acid chain: MOB kinase activator 1B (216 aa).

At serine 2 the chain carries N-acetylserine. Residues threonine 12 and threonine 35 each carry the phosphothreonine; by STK4/MST1 modification. 4 residues coordinate Zn(2+): cysteine 79, cysteine 84, histidine 161, and histidine 166.

This sequence belongs to the MOB1/phocein family. Binds STK38L. Interacts with LATS1 and LATS2. Phosphorylated by STK3/MST2 and STK4/MST1 and this phosphorylation enhances its binding to LATS1. In terms of tissue distribution, adrenal gland, bone marrow, brain, lung, placenta, prostate, salivary gland, skeletal muscle, testis, thymus, thyroid gland, uterus, colon with mucosa, fetal brain and fetal liver.

It localises to the cytoplasm. The protein resides in the nucleus. Functionally, activator of LATS1/2 in the Hippo signaling pathway which plays a pivotal role in organ size control and tumor suppression by restricting proliferation and promoting apoptosis. The core of this pathway is composed of a kinase cascade wherein STK3/MST2 and STK4/MST1, in complex with its regulatory protein SAV1, phosphorylates and activates LATS1/2 in complex with its regulatory protein MOB1, which in turn phosphorylates and inactivates YAP1 oncoprotein and WWTR1/TAZ. Phosphorylation of YAP1 by LATS1/2 inhibits its translocation into the nucleus to regulate cellular genes important for cell proliferation, cell death, and cell migration. Stimulates the kinase activity of STK38L. The chain is MOB kinase activator 1B from Homo sapiens (Human).